The chain runs to 94 residues: Putative defensin-like protein 88 (94 aa).

The N-terminal stretch at 1–26 is a signal peptide; it reads MATQKFSYFLLVLLMVFALILPSIIS. Cystine bridges form between Cys-32/Cys-72, Cys-38/Cys-59, and Cys-48/Cys-71.

This sequence belongs to the DEFL family.

It is found in the secreted. In Arabidopsis thaliana (Mouse-ear cress), this protein is Putative defensin-like protein 88.